The primary structure comprises 324 residues: Biotin synthase 1 (324 aa).

Residues 37 to 256 (NAIETASLLS…VALARILMPA (220 aa)) enclose the Radical SAM core domain. Residues Cys52, Cys56, and Cys59 each contribute to the [4Fe-4S] cluster site. Residues Cys96, Cys127, Cys187, and Arg260 each contribute to the [2Fe-2S] cluster site.

Belongs to the radical SAM superfamily. Biotin synthase family. As to quaternary structure, homodimer. [4Fe-4S] cluster serves as cofactor. Requires [2Fe-2S] cluster as cofactor.

The catalysed reaction is (4R,5S)-dethiobiotin + (sulfur carrier)-SH + 2 reduced [2Fe-2S]-[ferredoxin] + 2 S-adenosyl-L-methionine = (sulfur carrier)-H + biotin + 2 5'-deoxyadenosine + 2 L-methionine + 2 oxidized [2Fe-2S]-[ferredoxin]. It participates in cofactor biosynthesis; biotin biosynthesis; biotin from 7,8-diaminononanoate: step 2/2. Catalyzes the conversion of dethiobiotin (DTB) to biotin by the insertion of a sulfur atom into dethiobiotin via a radical-based mechanism. The sequence is that of Biotin synthase 1 from Paracoccus denitrificans (strain Pd 1222).